Here is a 298-residue protein sequence, read N- to C-terminus: Cyclin-dependent kinase 2 (298 aa).

M1 is modified (N-acetylmethionine). The region spanning 4-286 (FQKVEKIGEG…AKAALAHPFF (283 aa)) is the Protein kinase domain. K6 bears the N6-acetyllysine mark. An ATP-binding site is contributed by 10–18 (IGEGTYGVV). A Phosphothreonine modification is found at T14. Y15 is modified (phosphotyrosine; by WEE1). Position 19 is a phosphotyrosine (Y19). Residues K33, 81–83 (ELL), and D86 contribute to the ATP site. D127 functions as the Proton acceptor in the catalytic mechanism. Residues 129 to 132 (KPQN) and D145 each bind ATP. The Mg(2+) site is built by N132 and D145. T160 is subject to Phosphothreonine; by CAK and CCRK.

Belongs to the protein kinase superfamily. CMGC Ser/Thr protein kinase family. CDC2/CDKX subfamily. Found in a complex with CABLES1, CCNA1 and CCNE1. Interacts with CABLES1. Interacts with UHRF2. Part of a complex consisting of UHRF2, CDK2 and CCNE1. Interacts with the Speedy/Ringo proteins SPDYA and SPDYC. Interaction with SPDYA promotes kinase activation via a conformation change that alleviates obstruction of the substrate-binding cleft by the T-loop. Found in a complex with both SPDYA and CDKN1B/KIP1. Binds to RB1 and CDK7. Binding to CDKN1A (p21) leads to CDK2/cyclin E inactivation at the G1-S phase DNA damage checkpoint, thereby arresting cells at the G1-S transition during DNA repair. Associated with PTPN6 and beta-catenin/CTNNB1. Interacts with CACUL1. May interact with CEP63. Interacts with ANKRD17. Interacts with CEBPA (when phosphorylated). Forms a ternary complex with CCNA2 and CDKN1B; CDKN1B inhibits the kinase activity of CDK2 through conformational rearrangements. Interacts with cyclins A, B1, B3, D, or E. Interacts with CDK2AP2. It depends on Mg(2+) as a cofactor. Post-translationally, phosphorylated at Thr-160 by CDK7 in a CAK complex. Phosphorylation at Thr-160 promotes kinase activity, whereas phosphorylation at Tyr-15 by WEE1 reduces slightly kinase activity. Phosphorylated on Thr-14 and Tyr-15 during S and G2 phases before being dephosphorylated by CDC25A. Nitrosylated after treatment with nitric oxide (DETA-NO).

It localises to the cytoplasm. The protein resides in the cytoskeleton. Its subcellular location is the microtubule organizing center. It is found in the centrosome. The protein localises to the nucleus. It localises to the cajal body. The protein resides in the endosome. The enzyme catalyses L-seryl-[protein] + ATP = O-phospho-L-seryl-[protein] + ADP + H(+). It carries out the reaction L-threonyl-[protein] + ATP = O-phospho-L-threonyl-[protein] + ADP + H(+). With respect to regulation, phosphorylation at Thr-14 or Tyr-15 inactivates the enzyme, while phosphorylation at Thr-160 activates it. Stimulated by MYC. Inactivated by CDKN1A (p21). Serine/threonine-protein kinase involved in the control of the cell cycle; essential for meiosis, but dispensable for mitosis. Phosphorylates CABLES1, CTNNB1, CDK2AP2, ERCC6, NBN, USP37, p53/TP53, NPM1, CDK7, RB1, BRCA2, MYC, NPAT, EZH2. Triggers duplication of centrosomes and DNA. Acts at the G1-S transition to promote the E2F transcriptional program and the initiation of DNA synthesis, and modulates G2 progression; controls the timing of entry into mitosis/meiosis by controlling the subsequent activation of cyclin B/CDK1 by phosphorylation, and coordinates the activation of cyclin B/CDK1 at the centrosome and in the nucleus. Crucial role in orchestrating a fine balance between cellular proliferation, cell death, and DNA repair in embryonic stem cells (ESCs). Activity of CDK2 is maximal during S phase and G2; activated by interaction with cyclin E during the early stages of DNA synthesis to permit G1-S transition, and subsequently activated by cyclin A2 (cyclin A1 in germ cells) during the late stages of DNA replication to drive the transition from S phase to mitosis, the G2 phase. EZH2 phosphorylation promotes H3K27me3 maintenance and epigenetic gene silencing. Cyclin E/CDK2 prevents oxidative stress-mediated Ras-induced senescence by phosphorylating MYC. Involved in G1-S phase DNA damage checkpoint that prevents cells with damaged DNA from initiating mitosis; regulates homologous recombination-dependent repair by phosphorylating BRCA2, this phosphorylation is low in S phase when recombination is active, but increases as cells progress towards mitosis. In response to DNA damage, double-strand break repair by homologous recombination a reduction of CDK2-mediated BRCA2 phosphorylation. Involved in regulation of telomere repair by mediating phosphorylation of NBN. Phosphorylation of RB1 disturbs its interaction with E2F1. NPM1 phosphorylation by cyclin E/CDK2 promotes its dissociation from unduplicated centrosomes, thus initiating centrosome duplication. Cyclin E/CDK2-mediated phosphorylation of NPAT at G1-S transition and until prophase stimulates the NPAT-mediated activation of histone gene transcription during S phase. Required for vitamin D-mediated growth inhibition by being itself inactivated. Involved in the nitric oxide- (NO) mediated signaling in a nitrosylation/activation-dependent manner. USP37 is activated by phosphorylation and thus triggers G1-S transition. CTNNB1 phosphorylation regulates insulin internalization. Phosphorylates FOXP3 and negatively regulates its transcriptional activity and protein stability. Phosphorylates ERCC6 which is essential for its chromatin remodeling activity at DNA double-strand breaks. Acts as a regulator of the phosphatidylinositol 3-kinase/protein kinase B signal transduction by mediating phosphorylation of the C-terminus of protein kinase B (PKB/AKT1 and PKB/AKT2), promoting its activation. This Mesocricetus auratus (Golden hamster) protein is Cyclin-dependent kinase 2 (CDK2).